The sequence spans 208 residues: Ribonuclease HII (208 aa).

In terms of domain architecture, RNase H type-2 spans 17–208 (LRVCGIDEAG…SFRLRQLGEK (192 aa)). Aspartate 23, glutamate 24, and aspartate 120 together coordinate a divalent metal cation.

The protein belongs to the RNase HII family. Mn(2+) is required as a cofactor. It depends on Mg(2+) as a cofactor.

The protein resides in the cytoplasm. It carries out the reaction Endonucleolytic cleavage to 5'-phosphomonoester.. Its function is as follows. Endonuclease that specifically degrades the RNA of RNA-DNA hybrids. This chain is Ribonuclease HII, found in Chlorobium luteolum (strain DSM 273 / BCRC 81028 / 2530) (Pelodictyon luteolum).